The following is a 435-amino-acid chain: Trigger factor (435 aa).

In terms of domain architecture, PPIase FKBP-type spans 162–247 (GDRVIIDFKG…VKNVAEATLP (86 aa)).

The protein belongs to the FKBP-type PPIase family. Tig subfamily.

It is found in the cytoplasm. It carries out the reaction [protein]-peptidylproline (omega=180) = [protein]-peptidylproline (omega=0). In terms of biological role, involved in protein export. Acts as a chaperone by maintaining the newly synthesized protein in an open conformation. Functions as a peptidyl-prolyl cis-trans isomerase. In Chromobacterium violaceum (strain ATCC 12472 / DSM 30191 / JCM 1249 / CCUG 213 / NBRC 12614 / NCIMB 9131 / NCTC 9757 / MK), this protein is Trigger factor.